Consider the following 480-residue polypeptide: Immune evasion protein OPG047 (480 aa).

The 81-residue stretch at 10 to 90 (CKNILALSMT…SYTGKVYIDS (81 aa)) folds into the BTB domain. The BACK domain occupies 125–223 (CVECYMMGIE…NYLSPRGINN (99 aa)). Kelch repeat units follow at residues 273–319 (VVYL…PANN), 320–363 (KLYV…SINN), 365–408 (IYVM…VFGR), 410–447 (LFLV…IVDN), and 448–480 (KLLL…WDGK).

This sequence belongs to the orthopoxvirus OPG047 family.

Functionally, might have a role in the suppression of host immune response. This chain is Immune evasion protein OPG047 (OPG047), found in Vaccinia virus (strain Copenhagen) (VACV).